A 523-amino-acid polypeptide reads, in one-letter code: uncharacterized protein (523 aa).

One can recognise a Radical SAM core domain in the interval 193-447; that stretch reads RKCSGCGNCR…ALKRRMIGKR (255 aa). [4Fe-4S] cluster contacts are provided by Cys212, Cys220, and Cys223.

[4Fe-4S] cluster is required as a cofactor.

This is an uncharacterized protein from Methanopyrus kandleri (strain AV19 / DSM 6324 / JCM 9639 / NBRC 100938).